The chain runs to 261 residues: tRNA U34 carboxymethyltransferase (261 aa).

Residues Lys-25, Trp-39, Lys-44, Gly-63, 114 to 115 (VE), Tyr-135, and Arg-250 contribute to the carboxy-S-adenosyl-L-methionine site.

This sequence belongs to the class I-like SAM-binding methyltransferase superfamily. CmoB family. As to quaternary structure, homotetramer.

The catalysed reaction is carboxy-S-adenosyl-L-methionine + 5-hydroxyuridine(34) in tRNA = 5-carboxymethoxyuridine(34) in tRNA + S-adenosyl-L-homocysteine + H(+). Its function is as follows. Catalyzes carboxymethyl transfer from carboxy-S-adenosyl-L-methionine (Cx-SAM) to 5-hydroxyuridine (ho5U) to form 5-carboxymethoxyuridine (cmo5U) at position 34 in tRNAs. This chain is tRNA U34 carboxymethyltransferase, found in Helicobacter pylori (strain HPAG1).